The following is a 2346-amino-acid chain: N-benzoylphenylalaninol synthetase apmA (2346 aa).

The adenylation 1 stretch occupies residues 263-652; that stretch reads ESAAQKSPDA…GRKDLQVKIR (390 aa). Residues 784 to 860 form the Carrier 1 domain; sequence MPTTTTEMTL…DMAKAMTSTR (77 aa). The residue at position 821 (Ser-821) is an O-(pantetheine 4'-phosphoryl)serine. The tract at residues 896-1306 is condensation; that stretch reads QDAYPCSPLQ…ISPQDKENLL (411 aa). The segment at 1330–1713 is adenylation 2; the sequence is SQPNAPAICA…GRKDTQVKIR (384 aa). The Carrier 2 domain maps to 1842–1924; it reads SALRASEDKA…GLAAFIDAEL (83 aa). Ser-1883 is modified (O-(pantetheine 4'-phosphoryl)serine). The reductase (R) domain stretch occupies residues 1960 to 2311; that stretch reads VTGGTGFLGT…RNVQFLVEAG (352 aa).

The protein belongs to the NRP synthetase family.

It carries out the reaction benzoate + L-phenylalanine + 2 AH2 + 2 ATP = N-benzoyl-L-phenylalaninol + 2 A + 2 AMP + 2 diphosphate + H(+). Its pathway is secondary metabolite biosynthesis. Functionally, nonribosomal peptide synthase; part of the gene cluster that mediates the biosynthesis of asperphenamate, a rare linear amino acid ester that exhibits antitumor activity towards a number of cell lines. The structure of asperphenamate contains two subunits, N-benzoylphenylalanine and N-benzoylphenylalaninol, which are connected by an inter-molecular ester bond. The first step of asperphenamate biosynthesis is the generation of N-benzoylphenylalaninol by the nonribosomal peptide synthase apmA. Using phenylalanine and benzoic acid as substrates, apmA catalyzes amide bond formation and tethers the intermediate into the NRPS chain. Then, the terminal R domain of apmA catalyzes the reduction reaction to get the shunt product N-benzoylphenylalaninol. Subsequently, the nonribosomal peptide synthase apmB activates the same substrates as does apmA (phenylalanine and benzoic acid) to produce N-benzoylphenylalanine before condensing N-benzoylphenylalanine and N-benzoylphenylalaninol to release asperphenamate. The chain is N-benzoylphenylalaninol synthetase apmA from Penicillium brevicompactum.